A 658-amino-acid chain; its full sequence is DNA mismatch repair protein MutL (658 aa).

Residues 114-130 (RQEDSSHATQVKAEDGK) are compositionally biased toward basic and acidic residues. The interval 114–137 (RQEDSSHATQVKAEDGKLSSPTAA) is disordered.

It belongs to the DNA mismatch repair MutL/HexB family.

This protein is involved in the repair of mismatches in DNA. It is required for dam-dependent methyl-directed DNA mismatch repair. May act as a 'molecular matchmaker', a protein that promotes the formation of a stable complex between two or more DNA-binding proteins in an ATP-dependent manner without itself being part of a final effector complex. The chain is DNA mismatch repair protein MutL from Neisseria meningitidis serogroup C / serotype 2a (strain ATCC 700532 / DSM 15464 / FAM18).